Reading from the N-terminus, the 384-residue chain is MNATGTPVAPESCQQLAAGGHSRLIVLHYNHSGRLAGRGGPEDGGLGALRGLSVAASCLVVLENLLVLAAITSHMRSRRWVYYCLVNITLSDLLTGAAYLANVLLSGARTFRLAPAQWFLREGLLFTALAASTFSLLFTAGERFATMVRPVAESGATKTSRVYGFIGLCWLLAALLGMLPLLGWNCLCAFDRCSSLLPLYSKRYILFCLVIFAGVLATIMGLYGAIFRLVQASGQKAPRPAARRKARRLLKTVLMILLAFLVCWGPLFGLLLADVFGSNLWAQEYLRGMDWILALAVLNSAVNPIIYSFRSREVCRAVLSFLCCGCLRLGMRGPGDCLARAVEAHSGASTTDSSLRPRDSFRGSRSLSFRMREPLSSISSVRSI.

Residues 1–50 lie on the Extracellular side of the membrane; it reads MNATGTPVAPESCQQLAAGGHSRLIVLHYNHSGRLAGRGGPEDGGLGALR. Residues Asn-2 and Asn-30 are each glycosylated (N-linked (GlcNAc...) asparagine). The chain crosses the membrane as a helical span at residues 51–71; the sequence is GLSVAASCLVVLENLLVLAAI. Over 72 to 84 the chain is Cytoplasmic; the sequence is TSHMRSRRWVYYC. A helical transmembrane segment spans residues 85–105; the sequence is LVNITLSDLLTGAAYLANVLL. Over 106–117 the chain is Extracellular; sequence SGARTFRLAPAQ. Residues 118 to 138 form a helical membrane-spanning segment; the sequence is WFLREGLLFTALAASTFSLLF. Residues 139-161 are Cytoplasmic-facing; sequence TAGERFATMVRPVAESGATKTSR. A helical membrane pass occupies residues 162–182; sequence VYGFIGLCWLLAALLGMLPLL. At 183-206 the chain is on the extracellular side; the sequence is GWNCLCAFDRCSSLLPLYSKRYIL. The chain crosses the membrane as a helical span at residues 207-227; the sequence is FCLVIFAGVLATIMGLYGAIF. Topologically, residues 228 to 252 are cytoplasmic; that stretch reads RLVQASGQKAPRPAARRKARRLLKT. Residues 253–273 form a helical membrane-spanning segment; sequence VLMILLAFLVCWGPLFGLLLA. Residues 274-288 lie on the Extracellular side of the membrane; sequence DVFGSNLWAQEYLRG. The chain crosses the membrane as a helical span at residues 289 to 309; it reads MDWILALAVLNSAVNPIIYSF. At 310-384 the chain is on the cytoplasmic side; it reads RSREVCRAVL…LSSISSVRSI (75 aa). Residue Cys-323 is the site of S-palmitoyl cysteine attachment.

This sequence belongs to the G-protein coupled receptor 1 family. Specifically expressed in fetal and adult lymphoid and hematopoietic tissue as well as in lung. Considerable level of expression in adult and fetal spleen as well as adult peripheral leukocytes and lung. Lower expression in adult thymus, lymph node, bone marrow, and appendix as well as in fetal liver, thymus, and lung.

It is found in the cell membrane. In terms of biological role, receptor for the lysosphingolipid sphingosine 1-phosphate (S1P). S1P is a bioactive lysophospholipid that elicits diverse physiological effect on most types of cells and tissues. May be involved in cell migration processes that are specific for lymphocytes. In Homo sapiens (Human), this protein is Sphingosine 1-phosphate receptor 4 (S1PR4).